A 237-amino-acid polypeptide reads, in one-letter code: LexA repressor (237 aa).

Positions 26–46 form a DNA-binding region, H-T-H motif; the sequence is FDEMKDALDLRSKSGIHRLIT. Residues serine 158 and lysine 196 each act as for autocatalytic cleavage activity in the active site.

This sequence belongs to the peptidase S24 family. In terms of assembly, homodimer.

The catalysed reaction is Hydrolysis of Ala-|-Gly bond in repressor LexA.. Its function is as follows. Represses a number of genes involved in the response to DNA damage (SOS response), including recA and lexA. In the presence of single-stranded DNA, RecA interacts with LexA causing an autocatalytic cleavage which disrupts the DNA-binding part of LexA, leading to derepression of the SOS regulon and eventually DNA repair. In Rhodopseudomonas palustris (strain BisA53), this protein is LexA repressor.